The sequence spans 323 residues: Leucine-rich repeat-containing protein 46 (323 aa).

LRR repeat units lie at residues Glu49 to Arg70, Asn71 to Thr92, Ser93 to Gln114, and Tyr115 to Pro135. The region spanning Asn146–Asp188 is the LRRCT domain. Thr178 carries the post-translational modification Phosphothreonine. Residues Ser179, Ser185, and Ser186 each carry the phosphoserine modification. Residues Arg203–His228 are a coiled coil. The interval Met249–Lys323 is disordered. Residues Pro267–Met316 are compositionally biased toward low complexity. Ser303 carries the phosphoserine modification.

Testis-specific (at protein level).

The protein localises to the cell projection. It localises to the cilium. It is found in the flagellum. Required for normal spermatogenesis and male fertility. Plays an important role in sperm flagellum biogenesis. The sequence is that of Leucine-rich repeat-containing protein 46 (Lrrc46) from Mus musculus (Mouse).